A 293-amino-acid polypeptide reads, in one-letter code: 33 kDa chaperonin (293 aa).

2 cysteine pairs are disulfide-bonded: C230–C232 and C263–C266.

The protein belongs to the HSP33 family. Under oxidizing conditions two disulfide bonds are formed involving the reactive cysteines. Under reducing conditions zinc is bound to the reactive cysteines and the protein is inactive.

The protein resides in the cytoplasm. In terms of biological role, redox regulated molecular chaperone. Protects both thermally unfolding and oxidatively damaged proteins from irreversible aggregation. Plays an important role in the bacterial defense system toward oxidative stress. The chain is 33 kDa chaperonin from Edwardsiella ictaluri (strain 93-146).